The chain runs to 328 residues: Methionyl-tRNA formyltransferase (328 aa).

110–113 (SLLP) provides a ligand contact to (6S)-5,6,7,8-tetrahydrofolate.

The protein belongs to the Fmt family.

It catalyses the reaction L-methionyl-tRNA(fMet) + (6R)-10-formyltetrahydrofolate = N-formyl-L-methionyl-tRNA(fMet) + (6S)-5,6,7,8-tetrahydrofolate + H(+). Attaches a formyl group to the free amino group of methionyl-tRNA(fMet). The formyl group appears to play a dual role in the initiator identity of N-formylmethionyl-tRNA by promoting its recognition by IF2 and preventing the misappropriation of this tRNA by the elongation apparatus. This chain is Methionyl-tRNA formyltransferase, found in Prochlorococcus marinus (strain MIT 9215).